Consider the following 151-residue polypeptide: Putative pre-16S rRNA nuclease (151 aa).

This sequence belongs to the YqgF nuclease family.

It is found in the cytoplasm. Could be a nuclease involved in processing of the 5'-end of pre-16S rRNA. The protein is Putative pre-16S rRNA nuclease of Myxococcus xanthus (strain DK1622).